The primary structure comprises 337 residues: 2-ketoarginine methyltransferase (337 aa).

This sequence belongs to the 2-ketoarginine methyltransferase family.

It catalyses the reaction 5-guanidino-2-oxopentanoate + S-adenosyl-L-methionine = (3R)-5-guanidino-3-methyl-2-oxopentanoate + S-adenosyl-L-homocysteine + H(+). The protein operates within antibiotic biosynthesis. Its function is as follows. S-adenosyl-L-methionine-dependent methyltransferase involved in the formation of the rare amino acid 3-methylarginine (MeArg), which is incorporated into the peptidyl nucleoside antibiotic arginomycin. Transfers the methyl group from S-adenosyl-L-methionine into 5-guanidino-2-oxopentanoate acid to yield 5-guanidino-3-methyl-2-oxopentanoate, a precursor of MeArg. This is 2-ketoarginine methyltransferase from Streptomyces arginensis.